We begin with the raw amino-acid sequence, 248 residues long: Proteasome subunit alpha (248 aa).

The tract at residues leucine 229–glutamate 248 is disordered.

The protein belongs to the peptidase T1A family. In terms of assembly, the 20S proteasome core is composed of 14 alpha and 14 beta subunits that assemble into four stacked heptameric rings, resulting in a barrel-shaped structure. The two inner rings, each composed of seven catalytic beta subunits, are sandwiched by two outer rings, each composed of seven alpha subunits. The catalytic chamber with the active sites is on the inside of the barrel. Has a gated structure, the ends of the cylinder being occluded by the N-termini of the alpha-subunits. Is capped by the proteasome-associated ATPase, ARC.

It localises to the cytoplasm. Its pathway is protein degradation; proteasomal Pup-dependent pathway. The formation of the proteasomal ATPase ARC-20S proteasome complex, likely via the docking of the C-termini of ARC into the intersubunit pockets in the alpha-rings, may trigger opening of the gate for substrate entry. Interconversion between the open-gate and close-gate conformations leads to a dynamic regulation of the 20S proteasome proteolysis activity. Its function is as follows. Component of the proteasome core, a large protease complex with broad specificity involved in protein degradation. This chain is Proteasome subunit alpha, found in Streptomyces scabiei (strain 87.22).